Consider the following 445-residue polypeptide: Tubulin beta-2B chain (445 aa).

Positions 1 to 4 (MREI) match the MREI motif motif. Glutamine 11 serves as a coordination point for GTP. Serine 40 is subject to Phosphoserine. A Phosphothreonine modification is found at threonine 55. Lysine 58 bears the N6-acetyllysine; alternate mark. Residue lysine 58 is modified to N6-succinyllysine; alternate. Lysine 58 participates in a covalent cross-link: Glycyl lysine isopeptide (Lys-Gly) (interchain with G-Cter in ubiquitin); alternate. Glutamate 69, serine 138, glycine 142, threonine 143, and glycine 144 together coordinate GTP. Mg(2+) is bound at residue glutamate 69. The residue at position 172 (serine 172) is a Phosphoserine; by CDK1. GTP is bound by residues asparagine 204 and asparagine 226. Phosphothreonine occurs at positions 285 and 290. An Omega-N-methylarginine modification is found at arginine 318. Residue lysine 324 forms a Glycyl lysine isopeptide (Lys-Gly) (interchain with G-Cter in ubiquitin) linkage. The disordered stretch occupies residues 422 to 445 (YQQYQDATADEQGEFEEEEGEDEA). The span at 429–445 (TADEQGEFEEEEGEDEA) shows a compositional bias: acidic residues. 5-glutamyl polyglutamate is present on glutamate 438.

The protein belongs to the tubulin family. As to quaternary structure, dimer of alpha and beta chains. A typical microtubule is a hollow water-filled tube with an outer diameter of 25 nm and an inner diameter of 15 nM. Alpha-beta heterodimers associate head-to-tail to form protofilaments running lengthwise along the microtubule wall with the beta-tubulin subunit facing the microtubule plus end conferring a structural polarity. Microtubules usually have 13 protofilaments but different protofilament numbers can be found in some organisms and specialized cells. Mg(2+) is required as a cofactor. In terms of processing, some glutamate residues at the C-terminus are polyglycylated, resulting in polyglycine chains on the gamma-carboxyl group. Glycylation is mainly limited to tubulin incorporated into axonemes (cilia and flagella) whereas glutamylation is prevalent in neuronal cells, centrioles, axonemes, and the mitotic spindle. Both modifications can coexist on the same protein on adjacent residues, and lowering polyglycylation levels increases polyglutamylation, and reciprocally. The precise function of polyglycylation is still unclear. Some glutamate residues at the C-terminus are polyglutamylated, resulting in polyglutamate chains on the gamma-carboxyl group. Polyglutamylation plays a key role in microtubule severing by spastin (SPAST). SPAST preferentially recognizes and acts on microtubules decorated with short polyglutamate tails: severing activity by SPAST increases as the number of glutamates per tubulin rises from one to eight, but decreases beyond this glutamylation threshold. Post-translationally, phosphorylated on Ser-172 by CDK1 during the cell cycle, from metaphase to telophase, but not in interphase. This phosphorylation inhibits tubulin incorporation into microtubules.

It is found in the cytoplasm. Its subcellular location is the cytoskeleton. Tubulin is the major constituent of microtubules, a cylinder consisting of laterally associated linear protofilaments composed of alpha- and beta-tubulin heterodimers. Microtubules grow by the addition of GTP-tubulin dimers to the microtubule end, where a stabilizing cap forms. Below the cap, tubulin dimers are in GDP-bound state, owing to GTPase activity of alpha-tubulin. Implicated in neuronal migration. The sequence is that of Tubulin beta-2B chain (TUBB2B) from Bos taurus (Bovine).